Reading from the N-terminus, the 536-residue chain is Apoptosis inhibitor 5 homolog (536 aa).

The segment at 462 to 536 is disordered; it reads ITFGEKAAAN…GYRNRRFNKY (75 aa). Residues 472–487 are compositionally biased toward basic and acidic residues; sequence GKDKDQEPEKKSRPSN. Positions 498–507 are enriched in polar residues; sequence KYSNKVNQSY. Gly residues predominate over residues 516 to 528; that stretch reads RGGGGGGGSGGGY.

It belongs to the API5 family.

It localises to the nucleus. In terms of biological role, antiapoptotic factor. Also known to efficiently suppress E2F1-induced apoptosis. In Drosophila melanogaster (Fruit fly), this protein is Apoptosis inhibitor 5 homolog.